We begin with the raw amino-acid sequence, 116 residues long: Large ribosomal subunit protein bL19 (116 aa).

Belongs to the bacterial ribosomal protein bL19 family.

Its function is as follows. This protein is located at the 30S-50S ribosomal subunit interface and may play a role in the structure and function of the aminoacyl-tRNA binding site. In Syntrophomonas wolfei subsp. wolfei (strain DSM 2245B / Goettingen), this protein is Large ribosomal subunit protein bL19.